We begin with the raw amino-acid sequence, 336 residues long: uncharacterized protein (336 aa).

To bacterial alkanal monooxygenase alpha and beta chains.

This is an uncharacterized protein from Bacillus subtilis (strain 168).